The sequence spans 312 residues: Acetyl-coenzyme A carboxylase carboxyl transferase subunit alpha (312 aa).

A CoA carboxyltransferase C-terminal domain is found at 36–286 (RLDKEVKSIY…KEYFLDALRT (251 aa)).

It belongs to the AccA family. In terms of assembly, acetyl-CoA carboxylase is a heterohexamer composed of biotin carboxyl carrier protein (AccB), biotin carboxylase (AccC) and two subunits each of ACCase subunit alpha (AccA) and ACCase subunit beta (AccD).

The protein resides in the cytoplasm. The catalysed reaction is N(6)-carboxybiotinyl-L-lysyl-[protein] + acetyl-CoA = N(6)-biotinyl-L-lysyl-[protein] + malonyl-CoA. It functions in the pathway lipid metabolism; malonyl-CoA biosynthesis; malonyl-CoA from acetyl-CoA: step 1/1. Component of the acetyl coenzyme A carboxylase (ACC) complex. First, biotin carboxylase catalyzes the carboxylation of biotin on its carrier protein (BCCP) and then the CO(2) group is transferred by the carboxyltransferase to acetyl-CoA to form malonyl-CoA. The protein is Acetyl-coenzyme A carboxylase carboxyl transferase subunit alpha of Helicobacter pylori (strain HPAG1).